Reading from the N-terminus, the 776-residue chain is Disintegrin and metalloproteinase domain-containing protein 28 (776 aa).

The signal sequence occupies residues 1 to 19 (MLQALLTVSLLLSPVPVSA). Residues 20–193 (IKELPGVKKY…IARPATRLVK (174 aa)) constitute a propeptide that is removed on maturation. Residues 168–175 (STCGTDGV) carry the Cysteine switch motif. Cys-170 is a binding site for Zn(2+). The Extracellular portion of the chain corresponds to 194–666 (LNDGKVQKHE…CDDSSVVFYF (473 aa)). The region spanning 204–400 (KYIEYYLVLD…KLSNCLFNAP (197 aa)) is the Peptidase M12B domain. N-linked (GlcNAc...) asparagine glycans are attached at residues Asn-268 and Asn-275. Intrachain disulfides connect Cys-315–Cys-395, Cys-355–Cys-379, Cys-357–Cys-362, and Cys-466–Cys-486. Position 340 (His-340) interacts with Zn(2+). Glu-341 is a catalytic residue. The Zn(2+) site is built by His-344 and His-350. Asn-352 carries N-linked (GlcNAc...) asparagine glycosylation. The region spanning 408 to 494 (TPICGNQMVE…NCPDDRFRAN (87 aa)) is the Disintegrin domain. 3 N-linked (GlcNAc...) asparagine glycosylation sites follow: Asn-558, Asn-603, and Asn-629. Residues 626–658 (KSTNCSSKCKGHAVCDHELQCQCEEGWSPPDCD) form the EGF-like domain. Cystine bridges form between Cys-630–Cys-640, Cys-634–Cys-646, and Cys-648–Cys-657. Residues 667 to 687 (SIVVAVLFPVAVISLVVAIVI) traverse the membrane as a helical segment. Over 688-776 (RQQSSREKQK…SSFLDSNPKA (89 aa)) the chain is Cytoplasmic. A compositionally biased stretch (basic and acidic residues) spans 691 to 701 (SSREKQKKDQR). Disordered stretches follow at residues 691–728 (SSRE…PQEM) and 746–776 (PASF…NPKA). A compositionally biased stretch (basic residues) spans 709–718 (RPHKQKRKPQ).

The cofactor is Zn(2+). In terms of processing, pro-domain removal and maturation may be, at least in part, autocatalytic. As to expression, expressed at high levels in epididymis and at lower levels in lung.

It localises to the membrane. May play a role in the adhesive and proteolytic events that occur during lymphocyte emigration or may function in ectodomain shedding of lymphocyte surface target proteins, such as FASL and CD40L. May be involved in sperm maturation. The polypeptide is Disintegrin and metalloproteinase domain-containing protein 28 (ADAM28) (Macaca fascicularis (Crab-eating macaque)).